The following is a 219-amino-acid chain: Histone H1.4 (219 aa).

Residues 1–15 are compositionally biased toward low complexity; sequence MSETAPAAPAAPAPA. A disordered region spans residues 1–41; it reads MSETAPAAPAAPAPAEKTPIKKKARKAAGGAKRKASGPPVS. Residue S2 is modified to N-acetylserine. Phosphoserine is present on S2. K17 is modified (N6-acetyllysine). Residue T18 is modified to Phosphothreonine. Over residues 20–35 the composition is skewed to basic residues; the sequence is IKKKARKAAGGAKRKA. An N6-acetyllysine; alternate modification is found at K26. At K26 the chain carries N6-methyllysine; alternate. Position 34 is an N6-(beta-hydroxybutyryl)lysine; alternate (K34). K34 is subject to N6-succinyllysine; alternate. At S36 the chain carries Phosphoserine. An H15 domain is found at 36 to 109; it reads SGPPVSELIT…GASGSFKLNK (74 aa). K52 bears the N6-(beta-hydroxybutyryl)lysine mark. Residue R54 is modified to Citrulline. An N6-(beta-hydroxybutyryl)lysine mark is found at K64, K85, K90, and K106. The disordered stretch occupies residues 92–219; that stretch reads TLVQTKGTGA…KPKKTAAKKK (128 aa). Basic residues predominate over residues 119-140; the sequence is KAKKAGAAKAKKPAGAAKKPKK. T146 is modified (phosphothreonine). 2 stretches are compositionally biased toward basic residues: residues 149–160 and 168–185; these read KSTKKTPKKAKK and KKAK…KKAP. S150 carries the ADP-ribosylserine modification. Position 187 is a phosphoserine (S187). Over residues 192–219 the composition is skewed to basic residues; it reads RAVKPKAAKPKTSKPKAAKPKKTAAKKK.

This sequence belongs to the histone H1/H5 family. Post-translationally, H1 histones are progressively phosphorylated during the cell cycle, becoming maximally phosphorylated during late G2 phase and M phase, and being dephosphorylated sharply thereafter. Acetylated at Lys-26. Deacetylated at Lys-26 by SIRT1. In terms of processing, citrullination at Arg-54 (H1R54ci) by PADI4 takes place within the DNA-binding site of H1 and results in its displacement from chromatin and global chromatin decondensation, thereby promoting pluripotency and stem cell maintenance. Post-translationally, ADP-ribosylated on Ser-150 in response to DNA damage.

The protein localises to the nucleus. It localises to the chromosome. Its function is as follows. Histone H1 protein binds to linker DNA between nucleosomes forming the macromolecular structure known as the chromatin fiber. Histones H1 are necessary for the condensation of nucleosome chains into higher-order structured fibers. Also acts as a regulator of individual gene transcription through chromatin remodeling, nucleosome spacing and DNA methylation. The chain is Histone H1.4 from Rattus norvegicus (Rat).